Reading from the N-terminus, the 115-residue chain is Large ribosomal subunit protein eL30 (115 aa).

It belongs to the eukaryotic ribosomal protein eL30 family. As to quaternary structure, component of the large ribosomal subunit.

The protein resides in the cytoplasm. In terms of biological role, component of the large ribosomal subunit. The ribosome is a large ribonucleoprotein complex responsible for the synthesis of proteins in the cell. The protein is Large ribosomal subunit protein eL30 (RPL30) of Gallus gallus (Chicken).